We begin with the raw amino-acid sequence, 423 residues long: Galactosylceramide sulfotransferase (423 aa).

Residues 1 to 14 are Cytoplasmic-facing; the sequence is MPLPQKKRWESMAK. A helical; Signal-anchor for type II membrane protein membrane pass occupies residues 15–35; the sequence is GLVLGALFTSFLLLLYSYAVP. The Lumenal segment spans residues 36–423; sequence PLYTGLASTT…WKFIRDFLRW (388 aa). A disordered region spans residues 48–70; the sequence is GAAPCSPAPREPEAPTSANGSAG. N-linked (GlcNAc...) asparagine glycans are attached at residues N66, N156, and N312.

This sequence belongs to the galactose-3-O-sulfotransferase family.

Its subcellular location is the golgi apparatus membrane. It carries out the reaction a beta-D-galactosyl-(1&lt;-&gt;1')-N-acylsphing-4-enine + 3'-phosphoadenylyl sulfate = an N-acyl-1-beta-D-(3-O-sulfo)-galactosyl-sphing-4-enine + adenosine 3',5'-bisphosphate + H(+). The catalysed reaction is a 1-O-alkyl-2-acyl-3-O-(beta-D-galactosyl)-sn-glycerol + 3'-phosphoadenylyl sulfate = a 1-O-alkyl-2-acyl-3-(beta-D-3-sulfogalactosyl)-sn-glycerol + adenosine 3',5'-bisphosphate + H(+). The enzyme catalyses a beta-D-Gal-(1&lt;-&gt;1')-ceramide + 3'-phosphoadenylyl sulfate = 1-(3-O-sulfo-beta-D-galactosyl)-ceramide + adenosine 3',5'-bisphosphate + H(+). It catalyses the reaction a 1,2-diacyl-3-O-(beta-D-galactosyl)-sn-glycerol + 3'-phosphoadenylyl sulfate = 1,2-diacyl-3-(3-O-sulfo-beta-D-galactosyl)-sn-glycerol + adenosine 3',5'-bisphosphate + H(+). It carries out the reaction a beta-D-Gal-(1-&gt;4)-beta-D-Glc-(1&lt;-&gt;1)-Cer(d18:1(4E)) + 3'-phosphoadenylyl sulfate = beta-D-3-sulfogalactosyl-(1-&gt;4)-beta-D-glucosyl-(1&lt;-&gt;1')-N-acylsphing-4-enine + adenosine 3',5'-bisphosphate + H(+). It functions in the pathway lipid metabolism; sphingolipid metabolism. Its function is as follows. Catalyzes the transfer of a sulfate group to position 3 of non-reducing beta-galactosyl residues in glycerolipids and sphingolipids, therefore participates in the biosynthesis of sulfoglycolipids. Catalyzes the synthesis of galactosylceramide sulfate (sulfatide), a major lipid component of the myelin sheath and of monogalactosylalkylacylglycerol sulfate (seminolipid), present in spermatocytes. Seems to prefer beta-glycosides at the non-reducing termini of sugar chains attached to a lipid moiety. Also acts on lactosylceramide, galactosyl 1-alkyl-2-sn-glycerol and galactosyl diacylglycerol (in vitro). The polypeptide is Galactosylceramide sulfotransferase (Bos taurus (Bovine)).